Here is a 377-residue protein sequence, read N- to C-terminus: Palmitoyltransferase ZDHHC16 (377 aa).

At 1–79 (MRGQWSLLLG…WLVDNVIRWC (79 aa)) the chain is on the cytoplasmic side. Residues 80 to 100 (GVVFVVLVIVLTSSIVAIAYL) form a helical membrane-spanning segment. The Lumenal segment spans residues 101-116 (CVLPLILQTYSVPRLC). Residues 117–137 (WHFFYSHWNLILIVFHYYQAI) form a helical membrane-spanning segment. Residues 138–198 (TTPPGYPPQG…NNCVGHYNHR (61 aa)) lie on the Cytoplasmic side of the membrane. A DHHC domain is found at 155 to 205 (SICKKCINPKPARTHHCSICNRCVLKMDHHCPWLNNCVGHYNHRYFFSFCF). Cysteine 185 (S-palmitoyl cysteine intermediate) is an active-site residue. The helical transmembrane segment at 199 to 219 (YFFSFCFFMTLGCVYCSYGSW) threads the bilayer. Topologically, residues 220–266 (DLFREAYAAIEKMKQLDKNKLQAVANQTYHQTPPPTFSFRERVTHKS) are lumenal. A helical membrane pass occupies residues 267 to 287 (LVYLWFLCSSVALALGALTIW). The Cytoplasmic segment spans residues 288 to 377 (HAVLISRGET…TAHSASVMAV (90 aa)).

The protein belongs to the DHHC palmitoyltransferase family. In terms of assembly, interacts with ABL1. Interacts with COPS5/JAB1.

The protein localises to the endoplasmic reticulum membrane. The catalysed reaction is L-cysteinyl-[protein] + hexadecanoyl-CoA = S-hexadecanoyl-L-cysteinyl-[protein] + CoA. Palmitoyl acyltransferase that mediates palmitoylation of proteins such as PLN and ZDHHC6. Required during embryonic heart development and cardiac function, possibly by mediating palmitoylation of PLN, thereby affecting PLN phosphorylation and homooligomerization. Also required for eye development. Palmitoylates ZDHHC6, affecting the quaternary assembly of ZDHHC6, its localization, stability and function. May play a role in DNA damage response. May be involved in apoptosis regulation. Involved in the proliferation of neural stem cells by regulating the FGF/ERK pathway. This chain is Palmitoyltransferase ZDHHC16, found in Bos taurus (Bovine).